The chain runs to 79 residues: Small ribosomal subunit protein bS16 (79 aa).

The protein belongs to the bacterial ribosomal protein bS16 family.

The protein is Small ribosomal subunit protein bS16 of Marinobacter nauticus (strain ATCC 700491 / DSM 11845 / VT8) (Marinobacter aquaeolei).